The sequence spans 290 residues: Bifunctional protein FolD 1 (290 aa).

NADP(+) is bound by residues 172–174 (GAS) and Ile-238.

It belongs to the tetrahydrofolate dehydrogenase/cyclohydrolase family. Homodimer.

It catalyses the reaction (6R)-5,10-methylene-5,6,7,8-tetrahydrofolate + NADP(+) = (6R)-5,10-methenyltetrahydrofolate + NADPH. The enzyme catalyses (6R)-5,10-methenyltetrahydrofolate + H2O = (6R)-10-formyltetrahydrofolate + H(+). The protein operates within one-carbon metabolism; tetrahydrofolate interconversion. In terms of biological role, catalyzes the oxidation of 5,10-methylenetetrahydrofolate to 5,10-methenyltetrahydrofolate and then the hydrolysis of 5,10-methenyltetrahydrofolate to 10-formyltetrahydrofolate. This is Bifunctional protein FolD 1 from Pseudomonas putida (strain GB-1).